Consider the following 138-residue polypeptide: Basic phospholipase A2 Tbo-G6D49 (138 aa).

Positions 1–16 (MRTLWIMAVLLVGVEG) are cleaved as a signal peptide. 7 disulfide bridges follow: C42/C131, C44/C60, C59/C111, C65/C138, C66/C104, C73/C97, and C91/C102. Residues Y43, G45, and G47 each coordinate Ca(2+). H63 is an active-site residue. Ca(2+) is bound at residue D64. D105 is a catalytic residue.

As to quaternary structure, monomer. Ca(2+) is required as a cofactor. In terms of tissue distribution, expressed by the venom gland.

The protein resides in the secreted. The enzyme catalyses a 1,2-diacyl-sn-glycero-3-phosphocholine + H2O = a 1-acyl-sn-glycero-3-phosphocholine + a fatty acid + H(+). Functionally, snake venom phospholipase A2 (PLA2) that impairs hemostasis. It weakly inhibits ADP-induced platelet aggregation when tested on platelet rich plasma from human and rabbit blood (15-25% of inhibition at 5-10 ug of enzyme), and dose-dependently inhibits blood coagulation, possibly by inhibiting thrombin activation. Exhibits strong hydrolytic activities toward L-dipalmitoyl phosphatidylcholine. PLA2 catalyzes the calcium-dependent hydrolysis of the 2-acyl groups in 3-sn-phosphoglycerides. In Craspedocephalus borneensis (Borneo pit viper), this protein is Basic phospholipase A2 Tbo-G6D49.